Here is a 479-residue protein sequence, read N- to C-terminus: Poly(A) polymerase catalytic subunit (479 aa).

Active-site residues include aspartate 202 and aspartate 204. Aspartate 202, aspartate 204, and aspartate 253 together coordinate Ca(2+).

The protein belongs to the poxviridae poly(A) polymerase catalytic subunit family. In terms of assembly, heterodimer of a large (catalytic) subunit and a small (regulatory) subunit.

The enzyme catalyses RNA(n) + ATP = RNA(n)-3'-adenine ribonucleotide + diphosphate. Its function is as follows. Polymerase that creates the 3'-poly(A) tail of mRNA's. This chain is Poly(A) polymerase catalytic subunit (OPG063), found in Bos taurus (Bovine).